The following is a 208-amino-acid chain: Granulocyte colony-stimulating factor (208 aa).

The N-terminal stretch at 1–30 is a signal peptide; the sequence is MAQLSAQRRMKLMALQLLLWQSALWSGREA. 2 cysteine pairs are disulfide-bonded: Cys-72–Cys-78 and Cys-100–Cys-110. O-linked (GalNAc...) threonine glycosylation is present at Thr-169.

It belongs to the IL-6 superfamily. Monomer. In terms of processing, O-glycosylated.

The protein resides in the secreted. Functionally, granulocyte/macrophage colony-stimulating factors are cytokines that act in hematopoiesis by controlling the production, differentiation, and function of 2 related white cell populations of the blood, the granulocytes and the monocytes-macrophages. This CSF induces granulocytes. This chain is Granulocyte colony-stimulating factor (Csf3), found in Mus musculus (Mouse).